The sequence spans 279 residues: Ribonuclease Z (279 aa).

H61, H63, D65, H66, H153, D176, and H240 together coordinate Zn(2+). D65 functions as the Proton acceptor in the catalytic mechanism.

Belongs to the RNase Z family. Homodimer. Zn(2+) is required as a cofactor.

It carries out the reaction Endonucleolytic cleavage of RNA, removing extra 3' nucleotides from tRNA precursor, generating 3' termini of tRNAs. A 3'-hydroxy group is left at the tRNA terminus and a 5'-phosphoryl group is left at the trailer molecule.. In terms of biological role, zinc phosphodiesterase, which displays some tRNA 3'-processing endonuclease activity. Probably involved in tRNA maturation, by removing a 3'-trailer from precursor tRNA. In Mycobacterium marinum (strain ATCC BAA-535 / M), this protein is Ribonuclease Z.